The primary structure comprises 741 residues: Zinc finger and BTB domain-containing protein 20 (741 aa).

Residues 1–17 (MLERKKPKTAENQKASE) are compositionally biased toward basic and acidic residues. The segment at 1–28 (MLERKKPKTAENQKASEENEITQPGGSS) is disordered. The region spanning 104–167 (CDVTVRIHGS…MYSGVLRVSQ (64 aa)) is the BTB domain. The segment at 203 to 235 (GIQDSGQDTPRGTPESGTSGQSSDTESGYLQSH) is disordered. Polar residues predominate over residues 206-235 (DSGQDTPRGTPESGTSGQSSDTESGYLQSH). T211 is subject to Phosphothreonine. K330 is covalently cross-linked (Glycyl lysine isopeptide (Lys-Gly) (interchain with G-Cter in SUMO1); alternate). A Glycyl lysine isopeptide (Lys-Gly) (interchain with G-Cter in SUMO2); alternate cross-link involves residue K330. The disordered stretch occupies residues 350–440 (RNESEECTED…SSPERSNESE (91 aa)). At S353 the chain carries Phosphoserine. The span at 354-367 (EECTEDTDQAEGTE) shows a compositional bias: acidic residues. Residue T357 is modified to Phosphothreonine. Residue K371 forms a Glycyl lysine isopeptide (Lys-Gly) (interchain with G-Cter in SUMO2) linkage. A compositionally biased stretch (low complexity) spans 404–423 (AEPAQPEQAAEAPAESSAQP). C2H2-type zinc fingers lie at residues 578–600 (YECT…MFVH), 606–628 (HQCS…MVTH), 634–656 (YQCS…MRLH), and 662–684 (YECY…VALH). Residues T690 and T695 each carry the phosphothreonine modification. The C2H2-type 5 zinc-finger motif lies at 715 to 737 (YVCSVCPAKFDQIEQFNDHMRMH). Residue K723 forms a Glycyl lysine isopeptide (Lys-Gly) (interchain with G-Cter in SUMO2) linkage.

Can homodimerize. Binds to DNA. Post-translationally, sumoylated with SUMO1. In terms of tissue distribution, specifically expressed in early hippocampal neurons, cerebellar granule cells and gliogenic progenitors as well as in differentiated glia. Expressed in adult and aged myogenic satellite cells.

It is found in the nucleus. May be a transcription factor that may be involved in hematopoiesis, oncogenesis, and immune responses. Plays a role in postnatal myogenesis, may be involved in the regulation of satellite cells self-renewal. This is Zinc finger and BTB domain-containing protein 20 (Zbtb20) from Mus musculus (Mouse).